The following is a 403-amino-acid chain: Protein-glutamate methylesterase/protein-glutamine glutaminase (403 aa).

Positions 8–126 (AVLIVDDSAL…SAHLRTVSRK (119 aa)) constitute a Response regulatory domain. Asp-59 is subject to 4-aspartylphosphate. The CheB-type methylesterase domain maps to 204-393 (PLRESGALQI…VSLDDMAATI (190 aa)). Active-site residues include Ser-219, His-246, and Asp-342.

Belongs to the CheB family. Phosphorylated by CheA. Phosphorylation of the N-terminal regulatory domain activates the methylesterase activity.

The protein localises to the cytoplasm. The catalysed reaction is [protein]-L-glutamate 5-O-methyl ester + H2O = L-glutamyl-[protein] + methanol + H(+). It catalyses the reaction L-glutaminyl-[protein] + H2O = L-glutamyl-[protein] + NH4(+). In terms of biological role, involved in chemotaxis. Part of a chemotaxis signal transduction system that modulates chemotaxis in response to various stimuli. Catalyzes the demethylation of specific methylglutamate residues introduced into the chemoreceptors (methyl-accepting chemotaxis proteins or MCP) by CheR. Also mediates the irreversible deamidation of specific glutamine residues to glutamic acid. In Treponema pallidum (strain Nichols), this protein is Protein-glutamate methylesterase/protein-glutamine glutaminase.